The following is a 503-amino-acid chain: UDP-N-acetylmuramoylalanine--D-glutamate ligase (503 aa).

Residue 129–135 (GTNGKTT) coordinates ATP.

This sequence belongs to the MurCDEF family.

The protein localises to the cytoplasm. It carries out the reaction UDP-N-acetyl-alpha-D-muramoyl-L-alanine + D-glutamate + ATP = UDP-N-acetyl-alpha-D-muramoyl-L-alanyl-D-glutamate + ADP + phosphate + H(+). It participates in cell wall biogenesis; peptidoglycan biosynthesis. In terms of biological role, cell wall formation. Catalyzes the addition of glutamate to the nucleotide precursor UDP-N-acetylmuramoyl-L-alanine (UMA). This is UDP-N-acetylmuramoylalanine--D-glutamate ligase from Burkholderia orbicola (strain MC0-3).